We begin with the raw amino-acid sequence, 359 residues long: Acyl-CoA desaturase 3 (359 aa).

Positions 1–34 are disordered; sequence MPGHLLQEEMTPSYTTTTTITAPPSGSLQNGREK. At 1-72 the chain is on the cytoplasmic side; that stretch reads MPGHLLQEEM…EGPPPKLEYV (72 aa). The span at 11–27 shows a compositional bias: low complexity; it reads TPSYTTTTTITAPPSGS. A helical membrane pass occupies residues 73 to 93; that stretch reads WRNIILMALLHVGALYGITLV. Asn-75 is a substrate binding site. At 94–97 the chain is on the lumenal side; the sequence is PSCK. A helical membrane pass occupies residues 98 to 118; sequence LYTCLFAFVYYVISIEGIGAG. Residues 119-217 lie on the Cytoplasmic side of the membrane; sequence VHRLWSHRTY…EKLVMFQRRY (99 aa). The Fe cation site is built by His-120 and His-125. Residues 120-125 carry the Histidine box-1 motif; sequence HRLWSH. Positions 148, 155, and 156 each coordinate substrate. Fe cation-binding residues include His-157, His-160, and His-161. Residues 157-161 carry the Histidine box-2 motif; that stretch reads HRAHH. Arg-188 and Lys-189 together coordinate substrate. Ser-203 carries the post-translational modification Phosphoserine. The helical transmembrane segment at 218 to 237 threads the bilayer; sequence YKPGILLMCFILPTLVPWYC. Residues 238 to 241 lie on the Lumenal side of the membrane; that stretch reads WGET. A helical membrane pass occupies residues 242 to 263; that stretch reads FLNSFYVATLLRYAVVLNATWL. Trp-262 contacts substrate. At 264 to 359 the chain is on the cytoplasmic side; the sequence is VNSAAHLYGY…RTGDGSHKSG (96 aa). Fe cation is bound by residues His-269, His-298, His-301, and His-302. The Histidine box-3 motif lies at 298–302; that stretch reads HNYHH.

Belongs to the fatty acid desaturase type 1 family. The cofactor is Fe(2+). In terms of tissue distribution, detected in skin, but at lower levels compared to Scd1. Detected in the middlle part of the sebaceous gland, but not in hair follicle. Not detected in liver and brain.

It is found in the endoplasmic reticulum membrane. It localises to the microsome membrane. The catalysed reaction is hexadecanoyl-CoA + 2 Fe(II)-[cytochrome b5] + O2 + 2 H(+) = (9Z)-hexadecenoyl-CoA + 2 Fe(III)-[cytochrome b5] + 2 H2O. Its function is as follows. Stearoyl-CoA desaturase that utilizes O(2) and electrons from reduced cytochrome b5 to introduce the first double bond into saturated fatty acyl-CoA substrates. Catalyzes the insertion of a cis double bond at the delta-9 position into fatty acyl-CoA substrates including palmitoyl-CoA. Has a strong preference for saturated fatty acids with chain lengths of 14 or 16 carbon atoms (C14:0 and C16:0), and has only very low activity with stearatate (C18:0). Required for the biosynthesis of membrane phospholipids, cholesterol esters and triglycerides. The protein is Acyl-CoA desaturase 3 of Mus musculus (Mouse).